A 103-amino-acid chain; its full sequence is Histone H4 (103 aa).

Over residues 1 to 14 (MSGRGKGGKGLGKG) the composition is skewed to gly residues. Residues 1–20 (MSGRGKGGKGLGKGGAKRHR) form a disordered region. Ser2 is modified (N-acetylserine). Lys6 and Lys13 each carry N6-acetyl-N6-methyllysine; alternate. Lys17 is subject to N6-acetyllysine. The DNA-binding element occupies 17-21 (KRHRR).

Belongs to the histone H4 family. As to quaternary structure, the nucleosome is a histone octamer containing two molecules each of H2A, H2B, H3 and H4 assembled in one H3-H4 heterotetramer and two H2A-H2B heterodimers. The octamer wraps approximately 147 bp of DNA.

Its subcellular location is the nucleus. The protein resides in the chromosome. In terms of biological role, core component of nucleosome. Nucleosomes wrap and compact DNA into chromatin, limiting DNA accessibility to the cellular machineries which require DNA as a template. Histones thereby play a central role in transcription regulation, DNA repair, DNA replication and chromosomal stability. DNA accessibility is regulated via a complex set of post-translational modifications of histones, also called histone code, and nucleosome remodeling. This Mytilus chilensis (Chilean blue mussel) protein is Histone H4.